The following is a 634-amino-acid chain: MSVASTAAPFHTTSGSSGAISTFSVVDYVVFGLLLVLSLVIGLYHACRGWGHHTVGELLMADRKMGCLPVALSLLATFQSAVAILGAPAEIFRFGTQYWFLGCSYFLGLLIPAHIFIPVFYRLHLTSAYEYLELRFNKAVRICGTVTFIFQMVIYMGVALYAPSLALNAVTGFDLWLSVLALGIVCNIYTALGGLKAVIWTDVFQTLVMFLGQLVVIIVGAARVGGLGHVWNVTSQHGLISGINLDPDPFVRHTFWTLAFGGVFMMLSLYGVNQAQVQRYLSSHSERAAVLSCYAVFPCQQVALCMSCLIGLVMFAYYNMYSMSPELKQAAPDQLVLYFVMDLLKDMPGLPGLFVACLFSGSLSTISSAFNSLATVTMEDLIQPWFPQLTETRAIMLSRGLAFAYGLVCLGMAYISSHLGSVLQAALSIFGMVGGPLLGLFCLGLFFPCANPLGAIVGLLTGLTMAFWIGIGSIVSRMSSAVAPPPLNGSSSFLPANVTVAAVTTVMPSTLSKPTGLQHFYSLSYLWYSAHNSTTVIVVGLIVSLLTGGMRGRSLNPGTIYPVLPKLLALLPLSCQKRLCWRSHSQDIPVIPNLFPEKMRNGVLQDSTDKERMAEDGLVHQPCSPTYVVQETSL.

Transmembrane regions (helical) follow at residues 23-43, 65-85, 100-120, 142-162, 175-195, 207-227, 255-275, 295-315, 350-370, 403-423, 427-447, and 455-475; these read FSVV…VIGL, MGCL…VAIL, FLGC…IPVF, ICGT…ALYA, LWLS…LGGL, LVMF…VGGL, FWTL…VNQA, AVFP…LVMF, LPGL…SSAF, FAYG…GSVL, LSIF…GLFF, and AIVG…GSIV. N-linked (GlcNAc...) asparagine glycans are attached at residues Asn-488 and Asn-497. The chain crosses the membrane as a helical span at residues 526–546; it reads LWYSAHNSTTVIVVGLIVSLL.

It belongs to the sodium:solute symporter (SSF) (TC 2.A.21) family. Interacts with PDZD11. As to expression, expressed in the intestinal mucosa, liver and kidney (at protein level). Expressed in the colon.

It localises to the cell membrane. It is found in the apical cell membrane. The enzyme catalyses biotin(out) + 2 Na(+)(out) = biotin(in) + 2 Na(+)(in). It carries out the reaction (R)-pantothenate(out) + 2 Na(+)(out) = (R)-pantothenate(in) + 2 Na(+)(in). The catalysed reaction is (R)-lipoate(out) + 2 Na(+)(out) = (R)-lipoate(in) + 2 Na(+)(in). It catalyses the reaction iodide(out) + 2 Na(+)(out) = iodide(in) + 2 Na(+)(in). Its function is as follows. Sodium-dependent multivitamin transporter that mediates the electrogenic transport of pantothenate, biotin, lipoate and iodide. Functions as a Na(+)-coupled substrate symporter where the stoichiometry of Na(+):substrate is 2:1, creating an electrochemical Na(+) gradient used as driving force for substrate uptake. Required for biotin and pantothenate uptake in the intestine across the brush border membrane. Plays a role in the maintenance of intestinal mucosa integrity, by providing the gut mucosa with biotin. Contributes to the luminal uptake of biotin and pantothenate into the brain across the blood-brain barrier. The polypeptide is Sodium-dependent multivitamin transporter (Mus musculus (Mouse)).